Consider the following 745-residue polypeptide: MSVIAGHHVPRSNDQRQYDTPSVPINIAPDSEGHIHEMSRLKDYEVIEKLGQGTFGVVQKAKSKKDGSLVAIKQLINHSAKEGFPITAMREITILKQLNHKNILTIQDMIFEEPKMSNRTDIITMRGSFYTVTPYMSSDLVGLLENPKIKLELGQIKCIMQQLLKGIQYVHNQKFLHRDIKAANILIGQDGVLKIADFGLARIYHGNVPRLGMGPGGGEKAYTGLVVTRWYRPPEILLGERKYTTAVDLWGIGCVFAELFTGKPILVGKSDSHQAQIVFELVGSPLTWTDAAKLPNKNEYSCGLACKRSLEAKFASIMPTEAIDLLSGLLTLDPFKRLNALDALNHKFFSTDPLPLLPTQMPKFEESHEIDKERFKKLKDKEQAVSELKPPTEIRYDNHSESRYNADHSTFGGGVGGKETSFSSGKSDYIDHYEPRARRDHYEPRIRNDNKDSNDVRGEFESATRQEQRRRDIQNRLDAGGMDTYIPKTTTAKLREHSGTESLSKKYDNYQPINVSRGSKSPSPSKLSSISQSKADLISKPSAPKVASRESSLERKQVSNGIRTTTDVEPPRARARRPTDMFGRPLTSNSTQAQPTRNKSVERPKDLEKPTNGVTEDRNKKPVLEEKKEVVKPNLAIPKIKKSSSLVSLSSRSSTTPVISNPSKVTKRAASSVTPPVLPKKPKISKTSSESEVSDLEEDSDFTGENATVFERFMALEQLQKSPVYKRIINEKMRFEKLSGGHKSM.

Residues 1 to 21 are disordered; it reads MSVIAGHHVPRSNDQRQYDTP. The 306-residue stretch at 44–349 folds into the Protein kinase domain; the sequence is YEVIEKLGQG…ALDALNHKFF (306 aa). Residues 50–58 and lysine 73 each bind ATP; that span reads LGQGTFGVV. Aspartate 179 functions as the Proton acceptor in the catalytic mechanism. Basic and acidic residues-rich tracts occupy residues 380–406, 428–475, and 493–508; these read DKEQ…RYNA, DYID…DIQN, and KLRE…KKYD. The interval 380–701 is disordered; the sequence is DKEQAVSELK…EVSDLEEDSD (322 aa). A compositionally biased stretch (low complexity) spans 516–534; that stretch reads SRGSKSPSPSKLSSISQSK. Residues 547–557 show a composition bias toward basic and acidic residues; that stretch reads ASRESSLERKQ. 2 stretches are compositionally biased toward polar residues: residues 558–567 and 586–598; these read VSNGIRTTTD and LTSN…PTRN. Positions 599 to 631 are enriched in basic and acidic residues; sequence KSVERPKDLEKPTNGVTEDRNKKPVLEEKKEVV. Low complexity predominate over residues 632–660; it reads KPNLAIPKIKKSSSLVSLSSRSSTTPVIS. The segment covering 661–674 has biased composition (polar residues); it reads NPSKVTKRAASSVT. The segment covering 692 to 701 has biased composition (acidic residues); that stretch reads EVSDLEEDSD.

It belongs to the protein kinase superfamily. CMGC Ser/Thr protein kinase family. CDC2/CDKX subfamily.

It localises to the nucleus. It carries out the reaction L-seryl-[protein] + ATP = O-phospho-L-seryl-[protein] + ADP + H(+). The catalysed reaction is L-threonyl-[protein] + ATP = O-phospho-L-threonyl-[protein] + ADP + H(+). The enzyme catalyses [DNA-directed RNA polymerase] + ATP = phospho-[DNA-directed RNA polymerase] + ADP + H(+). Functionally, serine/threonine-protein kinase involved in transcription regulation. Phosphorylates the UBC2/RAD6 ubiquitin-conjugating enzyme (E2), leading to monoubiquitination of histone H2B and the silencing of telomeric-associated genes. Also required for histone H3 methylation. Necessary for the recovery from pheromone-induced growth arrest in the cell cycle G1 phase. Required for pseudohyphal growth and virulence in mice. The chain is Serine/threonine-protein kinase BUR1 (CRK1) from Candida albicans (strain SC5314 / ATCC MYA-2876) (Yeast).